Reading from the N-terminus, the 674-residue chain is UvrABC system protein B (674 aa).

The region spanning 26–183 is the Helicase ATP-binding domain; the sequence is EGLEDGLAHQ…RRLAELQYTR (158 aa). An ATP-binding site is contributed by 39 to 46; that stretch reads GVTGSGKT. The Beta-hairpin signature appears at 92 to 115; sequence YYDYYQPEAYVPSSDTFIEKDASV. Positions 431–597 constitute a Helicase C-terminal domain; that stretch reads QVDDLLSEIR…GLNKKISDIL (167 aa). Residues 634 to 669 form the UVR domain; sequence QKRIHQLEAQMQQHAQNLEFEEAAQVRDQLHQVREL.

This sequence belongs to the UvrB family. In terms of assembly, forms a heterotetramer with UvrA during the search for lesions. Interacts with UvrC in an incision complex.

Its subcellular location is the cytoplasm. The UvrABC repair system catalyzes the recognition and processing of DNA lesions. A damage recognition complex composed of 2 UvrA and 2 UvrB subunits scans DNA for abnormalities. Upon binding of the UvrA(2)B(2) complex to a putative damaged site, the DNA wraps around one UvrB monomer. DNA wrap is dependent on ATP binding by UvrB and probably causes local melting of the DNA helix, facilitating insertion of UvrB beta-hairpin between the DNA strands. Then UvrB probes one DNA strand for the presence of a lesion. If a lesion is found the UvrA subunits dissociate and the UvrB-DNA preincision complex is formed. This complex is subsequently bound by UvrC and the second UvrB is released. If no lesion is found, the DNA wraps around the other UvrB subunit that will check the other stand for damage. This Erwinia tasmaniensis (strain DSM 17950 / CFBP 7177 / CIP 109463 / NCPPB 4357 / Et1/99) protein is UvrABC system protein B.